The following is a 505-amino-acid chain: ATP synthase subunit alpha (505 aa).

171 to 178 (GDRQTGKT) lines the ATP pocket.

Belongs to the ATPase alpha/beta chains family. In terms of assembly, F-type ATPases have 2 components, CF(1) - the catalytic core - and CF(0) - the membrane proton channel. CF(1) has five subunits: alpha(3), beta(3), gamma(1), delta(1), epsilon(1). CF(0) has three main subunits: a(1), b(2) and c(9-12). The alpha and beta chains form an alternating ring which encloses part of the gamma chain. CF(1) is attached to CF(0) by a central stalk formed by the gamma and epsilon chains, while a peripheral stalk is formed by the delta and b chains.

It localises to the cell inner membrane. It carries out the reaction ATP + H2O + 4 H(+)(in) = ADP + phosphate + 5 H(+)(out). In terms of biological role, produces ATP from ADP in the presence of a proton gradient across the membrane. The alpha chain is a regulatory subunit. This chain is ATP synthase subunit alpha, found in Campylobacter hominis (strain ATCC BAA-381 / DSM 21671 / CCUG 45161 / LMG 19568 / NCTC 13146 / CH001A).